The sequence spans 141 residues: Probable mitochondrial pyruvate carrier 1 (141 aa).

A run of 2 helical transmembrane segments spans residues 31–52 (YLCSTHFWGPLSNFGIPIAAIL) and 60–82 (LISGRMTGALILYSSVFMRYAWM).

This sequence belongs to the mitochondrial pyruvate carrier (MPC) (TC 2.A.105) family. As to quaternary structure, the functional 150 kDa pyruvate import complex is a heteromer of mpc1 and mpc2.

It localises to the mitochondrion. The protein localises to the mitochondrion inner membrane. Its function is as follows. Mediates the uptake of pyruvate into mitochondria. This is Probable mitochondrial pyruvate carrier 1 from Schizosaccharomyces pombe (strain 972 / ATCC 24843) (Fission yeast).